The following is a 360-amino-acid chain: Dihydroorotate dehydrogenase (quinone) (360 aa).

FMN-binding positions include 66-70 and threonine 90; that span reads AGFDK. Lysine 70 is a substrate binding site. 115-119 contributes to the substrate binding site; it reads NRMGF. Residues asparagine 143 and asparagine 176 each coordinate FMN. Asparagine 176 serves as a coordination point for substrate. The Nucleophile role is filled by serine 179. Asparagine 181 contacts substrate. 2 residues coordinate FMN: lysine 212 and threonine 240. A substrate-binding site is contributed by 241-242; the sequence is NT. FMN is bound by residues glycine 264, glycine 293, and 314 to 315; that span reads YT.

This sequence belongs to the dihydroorotate dehydrogenase family. Type 2 subfamily. Monomer. Requires FMN as cofactor.

It localises to the cell membrane. It carries out the reaction (S)-dihydroorotate + a quinone = orotate + a quinol. Its pathway is pyrimidine metabolism; UMP biosynthesis via de novo pathway; orotate from (S)-dihydroorotate (quinone route): step 1/1. Its function is as follows. Catalyzes the conversion of dihydroorotate to orotate with quinone as electron acceptor. The chain is Dihydroorotate dehydrogenase (quinone) from Mycobacterium marinum (strain ATCC BAA-535 / M).